Consider the following 196-residue polypeptide: DnaA initiator-associating protein DiaA (196 aa).

The SIS domain occupies 34 to 196; the sequence is LVQSLLNGNK…DNTLFPHQND (163 aa).

Belongs to the SIS family. DiaA subfamily. In terms of assembly, homotetramer; dimer of dimers.

Functionally, required for the timely initiation of chromosomal replication via direct interactions with the DnaA initiator protein. The polypeptide is DnaA initiator-associating protein DiaA (Yersinia pestis bv. Antiqua (strain Antiqua)).